Here is a 77-residue protein sequence, read N- to C-terminus: Cell division topological specificity factor (77 aa).

The protein belongs to the MinE family.

Prevents the cell division inhibition by proteins MinC and MinD at internal division sites while permitting inhibition at polar sites. This ensures cell division at the proper site by restricting the formation of a division septum at the midpoint of the long axis of the cell. The sequence is that of Cell division topological specificity factor from Helicobacter pylori (strain HPAG1).